A 364-amino-acid chain; its full sequence is Glutamine synthetase (364 aa).

The GS beta-grasp domain maps to valine 15–glycine 94. The 264-residue stretch at histidine 101–phenylalanine 364 folds into the GS catalytic domain.

This sequence belongs to the glutamine synthetase family. In terms of assembly, homooctamer.

The protein resides in the cytoplasm. It catalyses the reaction L-glutamate + NH4(+) + ATP = L-glutamine + ADP + phosphate + H(+). In Yarrowia lipolytica (strain CLIB 122 / E 150) (Yeast), this protein is Glutamine synthetase (GLN1).